The following is a 603-amino-acid chain: DNA mismatch repair protein MutL (603 aa).

It belongs to the DNA mismatch repair MutL/HexB family.

Its function is as follows. This protein is involved in the repair of mismatches in DNA. It is required for dam-dependent methyl-directed DNA mismatch repair. May act as a 'molecular matchmaker', a protein that promotes the formation of a stable complex between two or more DNA-binding proteins in an ATP-dependent manner without itself being part of a final effector complex. This is DNA mismatch repair protein MutL from Bradyrhizobium diazoefficiens (strain JCM 10833 / BCRC 13528 / IAM 13628 / NBRC 14792 / USDA 110).